The chain runs to 247 residues: Probable transcriptional regulatory protein GSU1074 (247 aa).

The protein belongs to the TACO1 family.

It is found in the cytoplasm. This is Probable transcriptional regulatory protein GSU1074 from Geobacter sulfurreducens (strain ATCC 51573 / DSM 12127 / PCA).